We begin with the raw amino-acid sequence, 303 residues long: UDP-3-O-acyl-N-acetylglucosamine deacetylase (303 aa).

Zn(2+) is bound by residues His-78, His-237, and Asp-241. His-264 serves as the catalytic Proton donor.

The protein belongs to the LpxC family. The cofactor is Zn(2+).

The enzyme catalyses a UDP-3-O-[(3R)-3-hydroxyacyl]-N-acetyl-alpha-D-glucosamine + H2O = a UDP-3-O-[(3R)-3-hydroxyacyl]-alpha-D-glucosamine + acetate. It participates in glycolipid biosynthesis; lipid IV(A) biosynthesis; lipid IV(A) from (3R)-3-hydroxytetradecanoyl-[acyl-carrier-protein] and UDP-N-acetyl-alpha-D-glucosamine: step 2/6. Functionally, catalyzes the hydrolysis of UDP-3-O-myristoyl-N-acetylglucosamine to form UDP-3-O-myristoylglucosamine and acetate, the committed step in lipid A biosynthesis. The sequence is that of UDP-3-O-acyl-N-acetylglucosamine deacetylase from Pseudomonas syringae pv. tomato (strain ATCC BAA-871 / DC3000).